The sequence spans 258 residues: Flagellin B3 (258 aa).

Positions 1 to 8 (MRFLKKRG) are excised as a propeptide.

It belongs to the archaeal flagellin family.

It localises to the archaeal flagellum. Functionally, flagellin is the subunit protein which polymerizes to form the filaments of archaeal flagella. This chain is Flagellin B3 (flaB3), found in Thermococcus kodakarensis (strain ATCC BAA-918 / JCM 12380 / KOD1) (Pyrococcus kodakaraensis (strain KOD1)).